Reading from the N-terminus, the 101-residue chain is MSRRCELTAKGVQTGHKVSHSNIKTKRRFLPNLVNVTFLSDALGRPVRLRVSTNALKSVDHRGGLDAFLAKASIAELSPKAAELKRAIAKKKAGEPAAAAS.

This sequence belongs to the bacterial ribosomal protein bL28 family.

The sequence is that of Large ribosomal subunit protein bL28 from Rhodopseudomonas palustris (strain BisB5).